Reading from the N-terminus, the 939-residue chain is Protein translocase subunit SecA (939 aa).

Residues glutamine 85, 103–107 (GEGKT), and aspartate 504 each bind ATP. Residues 850 to 939 (PVQDGAERPS…KGGGGRRRKK (90 aa)) are disordered. The span at 854–864 (GAERPSLEKEG) shows a compositional bias: basic and acidic residues. Positions 924–939 (ERRKAQKGGGGRRRKK) are enriched in basic residues.

The protein belongs to the SecA family. Monomer and homodimer. Part of the essential Sec protein translocation apparatus which comprises SecA, SecYEG and auxiliary proteins SecDF. Other proteins may also be involved.

It localises to the cell membrane. It is found in the cytoplasm. The catalysed reaction is ATP + H2O + cellular proteinSide 1 = ADP + phosphate + cellular proteinSide 2.. Functionally, part of the Sec protein translocase complex. Interacts with the SecYEG preprotein conducting channel. Has a central role in coupling the hydrolysis of ATP to the transfer of proteins into and across the cell membrane, serving as an ATP-driven molecular motor driving the stepwise translocation of polypeptide chains across the membrane. The sequence is that of Protein translocase subunit SecA from Streptomyces griseus subsp. griseus (strain JCM 4626 / CBS 651.72 / NBRC 13350 / KCC S-0626 / ISP 5235).